Consider the following 229-residue polypeptide: Adenosylcobinamide-GDP ribazoletransferase (229 aa).

Transmembrane regions (helical) follow at residues 31-51 (AMLL…AVLA), 55-75 (AVEL…AASS), 111-131 (AGVL…ATLL), 134-154 (PLLA…VCCT), 176-196 (VAVL…LVLV), and 208-228 (GDVM…AWAA).

It belongs to the CobS family. Mg(2+) serves as cofactor.

It is found in the cell membrane. It catalyses the reaction alpha-ribazole + adenosylcob(III)inamide-GDP = adenosylcob(III)alamin + GMP + H(+). It carries out the reaction alpha-ribazole 5'-phosphate + adenosylcob(III)inamide-GDP = adenosylcob(III)alamin 5'-phosphate + GMP + H(+). Its pathway is cofactor biosynthesis; adenosylcobalamin biosynthesis; adenosylcobalamin from cob(II)yrinate a,c-diamide: step 7/7. In terms of biological role, joins adenosylcobinamide-GDP and alpha-ribazole to generate adenosylcobalamin (Ado-cobalamin). Also synthesizes adenosylcobalamin 5'-phosphate from adenosylcobinamide-GDP and alpha-ribazole 5'-phosphate. This chain is Adenosylcobinamide-GDP ribazoletransferase, found in Nocardioides sp. (strain ATCC BAA-499 / JS614).